The sequence spans 226 residues: uncharacterized protein (226 aa).

An HTH cro/C1-type domain is found at 168-226 (ISALRNKLGLTQTDLGKRINVDANVIRNIETGDLVAFNVQDPMVRSLAYALGIRTIKYQ). The H-T-H motif DNA-binding region spans 179–198 (QTDLGKRINVDANVIRNIET).

This is an uncharacterized protein from Acanthamoeba polyphaga mimivirus (APMV).